The chain runs to 166 residues: Lipoprotein signal peptidase (166 aa).

The next 4 membrane-spanning stretches (helical) occupy residues 10–30 (GGAL…DQLT), 46–66 (LTPF…GFLA), 71–91 (WQRW…CYLL), and 100–120 (FSLS…DRLI). Catalysis depends on residues D126 and D144. A helical membrane pass occupies residues 135 to 155 (WHWPAFNLADSAITVGAVLLI).

The protein belongs to the peptidase A8 family.

It localises to the cell inner membrane. The enzyme catalyses Release of signal peptides from bacterial membrane prolipoproteins. Hydrolyzes -Xaa-Yaa-Zaa-|-(S,diacylglyceryl)Cys-, in which Xaa is hydrophobic (preferably Leu), and Yaa (Ala or Ser) and Zaa (Gly or Ala) have small, neutral side chains.. It functions in the pathway protein modification; lipoprotein biosynthesis (signal peptide cleavage). Its function is as follows. This protein specifically catalyzes the removal of signal peptides from prolipoproteins. This chain is Lipoprotein signal peptidase, found in Burkholderia thailandensis (strain ATCC 700388 / DSM 13276 / CCUG 48851 / CIP 106301 / E264).